A 461-amino-acid chain; its full sequence is Nuclear distribution protein PAC1 (461 aa).

In terms of domain architecture, LisH spans 9 to 41; sequence QAEELHKSIIAYLTANNLLDTANTLRAELNLNE. A coiled-coil region spans residues 61–88; it reads TSVVRLQKKIMDLESRMSAMQAELDNAT. 8 WD repeats span residues 114–155, 157–197, 201–248, 251–290, 312–355, 357–396, 401–446, and 448–461; these read SHRD…RTIK, HTRA…KNIR, GHDH…CLRT, GHTA…PETK, QYLS…LLTL, GHDN…KCIK, AHER…IRCV, and ATGG…IFAN.

Belongs to the WD repeat LIS1/nudF family. In terms of assembly, self-associates. Interacts with NDL1 and dynein.

The protein localises to the cytoplasm. It is found in the cytoskeleton. It localises to the spindle pole. Positively regulates the activity of the minus-end directed microtubule motor protein dynein. May enhance dynein-mediated microtubule sliding by targeting dynein to the microtubule plus end. Required for nuclear migration during vegetative growth as well as development. Required for retrograde early endosome (EE) transport from the hyphal tip. Required for localization of dynein to the mitotic spindle poles. Recruits additional proteins to the dynein complex at SPBs. The polypeptide is Nuclear distribution protein PAC1 (Arthroderma benhamiae (strain ATCC MYA-4681 / CBS 112371) (Trichophyton mentagrophytes)).